Reading from the N-terminus, the 206-residue chain is MSQNELTTGDFTDEHEPFGLFETWLTEAKASEINDPNAVALATVDESGLPNVRMVLLKDFDQNGFVFYTNFESQKGTEILSQKKAAMCFHWKSLRRQVRLRGEVEVVSDAEADAYYQTRPIGSRIGAWASKQSRPLESRFALEKAVAEYTARYALGSIPRPAHWSGFRIKPLTIEFWRDGKFRLHDRIEFRREALGQPWNKVRMYP.

FMN contacts are provided by residues 53–58 (RMVLLK), 68–69 (YT), Lys75, and Gln97. Lys58 is a binding site for substrate. 3 residues coordinate substrate: Tyr115, Arg119, and Ser123. Residues 132 to 133 (QS) and Trp177 contribute to the FMN site. Residue 183–185 (RLH) coordinates substrate. Arg187 contacts FMN.

This sequence belongs to the pyridoxamine 5'-phosphate oxidase family. Homodimer. Requires FMN as cofactor.

It carries out the reaction pyridoxamine 5'-phosphate + O2 + H2O = pyridoxal 5'-phosphate + H2O2 + NH4(+). The enzyme catalyses pyridoxine 5'-phosphate + O2 = pyridoxal 5'-phosphate + H2O2. It functions in the pathway cofactor metabolism; pyridoxal 5'-phosphate salvage; pyridoxal 5'-phosphate from pyridoxamine 5'-phosphate: step 1/1. Its pathway is cofactor metabolism; pyridoxal 5'-phosphate salvage; pyridoxal 5'-phosphate from pyridoxine 5'-phosphate: step 1/1. Catalyzes the oxidation of either pyridoxine 5'-phosphate (PNP) or pyridoxamine 5'-phosphate (PMP) into pyridoxal 5'-phosphate (PLP). The sequence is that of Pyridoxine/pyridoxamine 5'-phosphate oxidase from Allorhizobium ampelinum (strain ATCC BAA-846 / DSM 112012 / S4) (Agrobacterium vitis (strain S4)).